The sequence spans 1304 residues: Zinc finger CCCH domain-containing protein 4 (1304 aa).

Pro residues predominate over residues 1 to 33; sequence MEAVPGTPPPPPSESPPPPSPPPPSTPSPPPCS. The interval 1 to 387 is disordered; sequence MEAVPGTPPP…SDHDKPHQQS (387 aa). Acidic residues predominate over residues 53 to 73; that stretch reads DREDGELEEGELEDDGAEEVQ. A compositionally biased stretch (basic and acidic residues) spans 80-99; the sequence is ERSRKEKGEKHHSDSEEEKS. Phosphoserine is present on residues serine 92 and serine 94. Positions 94 to 128 form a coiled coil; it reads SEEEKSHRRLKRKRKKEREKEKRRSKKRRKSKHKR. The span at 100-130 shows a compositional bias: basic residues; sequence HRRLKRKRKKEREKEKRRSKKRRKSKHKRHA. Positions 135 to 144 are enriched in acidic residues; sequence DFSDFSDDSD. At tyrosine 155 the chain carries Phosphotyrosine. A compositionally biased stretch (polar residues) spans 165 to 174; sequence SHQQYSSSHN. The segment covering 194-218 has biased composition (acidic residues); that stretch reads EDYENEQYGEYEGDEEEDMGKEDYD. Basic and acidic residues predominate over residues 219-235; that stretch reads DFTKELNQYRRAKEGSS. Residues 238–251 are compositionally biased toward basic residues; it reads RGSRGRGRGYRGRG. A compositionally biased stretch (gly residues) spans 252-264; it reads SRGGSRGRGMGRG. The span at 277-303 shows a compositional bias: acidic residues; it reads PEDEEDLYEEEIEYGESEEPMGDDDYD. Over residues 304–320 the composition is skewed to basic and acidic residues; sequence DYSKELNQYRRSKDSRG. The span at 322 to 346 shows a compositional bias: basic residues; sequence GLSRGRGRGSRGGRGKGMGRGRGRG. Positions 357 to 368 are enriched in acidic residues; that stretch reads NDDEDFYDDDMG. Residues 376–387 are compositionally biased toward basic and acidic residues; it reads RRSDHDKPHQQS. C3H1-type zinc fingers lie at residues 389–416, 418–445, and 446–469; these read KKGK…HDIE, PKKR…HGDF, and PCKL…HDPL. The span at 485–495 shows a compositional bias: acidic residues; the sequence is AEAGAEDEKEV. Residues 485-567 are disordered; it reads AEAGAEDEKE…LPTHEPLSPQ (83 aa). Pro residues-rich tracts occupy residues 506 to 529 and 538 to 556; these read LPKP…PAPT and GGPP…PPQM. Arginine 599 carries the post-translational modification Asymmetric dimethylarginine. Disordered regions lie at residues 601 to 691, 719 to 970, and 994 to 1304; these read PGPG…DSPH, PGLV…SHIK, and LPIP…PFCQ. Positions 603–622 are enriched in pro residues; sequence PGGPSGPMGPGPNMGPPGPM. The span at 628–660 shows a compositional bias: basic and acidic residues; it reads PDMHPDMHPDMHPDMHPDMHPDMHPDMHPDMHP. Pro residues predominate over residues 669 to 683; sequence NPGPPMGPGGPPMMP. Residues 778–809 are a coiled coil; that stretch reads ALYLRIQQKQQEEERARRLAESSKQDRENEEG. A compositionally biased stretch (basic and acidic residues) spans 787–804; it reads QQEEERARRLAESSKQDR. Serine 816 and serine 817 each carry phosphoserine. Polar residues predominate over residues 824–852; it reads SSVTSILKTLRQQTSSRPQASVGEPSSSG. Residues 869-884 are compositionally biased toward basic and acidic residues; the sequence is SDPRLSRDPRLSRHAE. Residues serine 913, serine 916, and serine 917 each carry the phosphoserine modification. Low complexity predominate over residues 913–929; that stretch reads SLHSSPAGPSSSKGQPP. Over residues 994-1005 the composition is skewed to pro residues; it reads LPIPKQDVPPVP. Polar residues-rich tracts occupy residues 1028-1044 and 1058-1067; these read NTRQ…SGSN and VNVNTPGQSE. The segment covering 1068–1085 has biased composition (basic and acidic residues); that stretch reads KPSDPRVRKTPTDPRLQK. Composition is skewed to low complexity over residues 1098–1129 and 1137–1146; these read PCPT…VLAA and SSGQSSVLSG. Serine 1104, serine 1109, serine 1111, and serine 1115 each carry phosphoserine. At threonine 1119 the chain carries Phosphothreonine. Positions 1204-1220 are enriched in polar residues; the sequence is KASTDGATATDRYNSYN. A compositionally biased stretch (low complexity) spans 1225–1235; the sequence is KATAAPTAASS. Phosphoserine occurs at positions 1270 and 1276.

This sequence belongs to the suppressor of sable family. In terms of assembly, interacts with WDR82.

The protein resides in the chromosome. RNA-binding protein that suppresses transcription of long non-coding RNAs (lncRNAs). LncRNAs are defined as transcripts more than 200 nucleotides that are not translated into protein. Together with WDR82, part of a transcription termination checkpoint that promotes transcription termination of lncRNAs and their subsequent degradation by the exosome. The transcription termination checkpoint is activated by the inefficiently spliced first exon of lncRNAs. This Mus musculus (Mouse) protein is Zinc finger CCCH domain-containing protein 4.